The primary structure comprises 752 residues: Pentatricopeptide repeat-containing protein At5g13270, chloroplastic (752 aa).

A chloroplast-targeting transit peptide spans 1-80 (MTILTVQSSF…LQEMDKAGVS (80 aa)). PPR repeat units follow at residues 47–81 (QGQVENLHLVSLSKHRKLNEAFEFLQEMDKAGVSV), 82–116 (SSYSYQCLFEACRELRSLSHGRLLHDRMRMGIENP), 117–147 (SVLLQNCVLQMYCECRSLEDADKLFDEMSEL), 148–182 (NAVSRTTMISAYAEQGILDKAVGLFSGMLASGDKP), 183–217 (PSSMYTTLLKSLVNPRALDFGRQIHAHVIRAGLCS), 218–248 (NTSIETGIVNMYVKCGWLVGAKRVFDQMAVK), 249–283 (KPVACTGLMVGYTQAGRARDALKLFVDLVTEGVEW), 284–318 (DSFVFSVVLKACASLEELNLGKQIHACVAKLGLES), 319–349 (EVSVGTPLVDFYIKCSSFESACRAFQEIREP), 350–384 (NDVSWSAIISGYCQMSQFEEAVKTFKSLRSKNASI), 386–420 (NSFTYTSIFQACSVLADCNIGGQVHADAIKRSLIG), 421–451 (SQYGESALITMYSKCGCLDDANEVFESMDNP), 452–486 (DIVAWTAFISGHAYYGNASEALRLFEKMVSCGMKP), 487–522 (NSVTFIAVLTACSHAGLVEQGKHCLDTMLRKYNVAP), and 523–553 (TIDHYDCMIDIYARSGLLDEALKFMKNMPFE). The segment at 558 to 633 (SWKCFLSGCW…ELSCSWIQEK (76 aa)) is type E motif. Positions 634–664 (GKIHRFIVGDKHHPQTQEIYEKLKEFDGFME) are type E(+) motif. A type DYW motif region spans residues 665–752 (GDMFQCNMTE…EGKCSCNDYW (88 aa)).

The protein belongs to the PPR family. PCMP-H subfamily.

The protein resides in the plastid. Its subcellular location is the chloroplast. The sequence is that of Pentatricopeptide repeat-containing protein At5g13270, chloroplastic (PCMP-H90) from Arabidopsis thaliana (Mouse-ear cress).